Consider the following 283-residue polypeptide: MSRSDWIFISLQGFFCLAGVIWKSREGYPIIDFPCPLQFIDSSDATLSYGTTSPWFGFRAVASMQSIWDNGPWFWLHLMLYIAQLVGLILIILHETVPHGAFLRKFESLAALGYLSYTVGLSTAFPVFSLWILNQYRAEKLVTAWPRRQEKAFLRTIFWCTGISHIGIFMVAIVATLLHRDATAPFHIGNSLLGVPDCSQFPCSEIAARHARLRQINEMTGTSSGFFLTVGLFSQALEAENKHLSLRVMVRMFFVSLIAGPAAGSADVLLLRDSITRSKKDCG.

A signal peptide spans 1-27 (MSRSDWIFISLQGFFCLAGVIWKSREG). Transmembrane regions (helical) follow at residues 73 to 93 (WFWLHLMLYIAQLVGLILIIL), 112 to 132 (LGYLSYTVGLSTAFPVFSLWI), 157 to 177 (IFWCTGISHIGIFMVAIVATL), 219 to 239 (MTGTSSGFFLTVGLFSQALEA), and 250 to 270 (VRMFFVSLIAGPAAGSADVLL).

The protein belongs to the ltmS family.

It localises to the membrane. Functionally, part of the gene cluster that mediates the biosynthesis of lolitrems, indole-diterpene mycotoxins that are potent tremorgens in mammals, and are synthesized by clavicipitaceous fungal endophytes in association with their grass hosts. The geranylgeranyl diphosphate (GGPP) synthase ltmG is proposed to catalyze the first step in lolitrem biosynthesis. LtmG catalyzes a series of iterative condensations of isopentenyl diphosphate (IPP) with dimethylallyl diphosphate (DMAPP), geranyl diphosphate (GPP), and farnesyl diphosphate (FPP), to form GGPP. GGPP then condenses with indole-3-glycerol phosphate to form 3-geranylgeranylindole, an acyclic intermediate, to be incorporated into paxilline. Either ltmG or ltmC could be responsible for this step, as both are putative prenyl transferases. The FAD-dependent monooxygenase ltmM then catalyzes the epoxidation of the two terminal alkenes of the geranylgeranyl moiety, which is subsequently cyclized by ltmB, to paspaline. The cytochrome P450 monooxygenases ltmQ and ltmP can sequentially oxidize paspaline to terpendole E and terpendole F. Alternatively, ltmP converts paspaline to an intermediate which is oxidized by ltmQ to terpendole F. LtmF, ltmK, ltmE and ltmJ appear to be unique to the epichloe endophytes. The prenyltransferase ltmF is involved in the 27-hydroxyl-O-prenylation. The cytochrome P450 monooxygenase ltmK is required for the oxidative acetal ring formation. The multi-functional prenyltransferase ltmE is required for C20- and C21-prenylations of the indole ring of paspalanes and acts together with the cytochrome P450 monooxygenase ltmJ to yield lolitremanes by multiple oxidations and ring closures. The stereoisomer pairs of lolitriol and lolitrem N or lolitrem B and lolitrem F may be attributed to variations in the way in which ring closure can occur under the action of ltmJ. While the major product of this pathway is lolitrem B, the prenyl transferases and cytochrome P450 monooxygenases identified in this pathway have a remarkable versatility in their regio- and stereo-specificities to generate a diverse range of metabolites that are products of a metabolic grid rather than a linear pathway. This chain is Lolitrem B biosynthesis cluster protein S, found in Epichloe festucae (strain Fl1).